A 209-amino-acid polypeptide reads, in one-letter code: Uridine kinase (209 aa).

Position 12-19 (12-19 (GGSASGKT)) interacts with ATP.

It belongs to the uridine kinase family.

The protein resides in the cytoplasm. It catalyses the reaction uridine + ATP = UMP + ADP + H(+). The catalysed reaction is cytidine + ATP = CMP + ADP + H(+). Its pathway is pyrimidine metabolism; CTP biosynthesis via salvage pathway; CTP from cytidine: step 1/3. It participates in pyrimidine metabolism; UMP biosynthesis via salvage pathway; UMP from uridine: step 1/1. The sequence is that of Uridine kinase from Chloroflexus aurantiacus (strain ATCC 29366 / DSM 635 / J-10-fl).